Here is a 213-residue protein sequence, read N- to C-terminus: uncharacterized protein (213 aa).

G53, E74, and D97 together coordinate S-adenosyl-L-methionine.

The protein belongs to the methyltransferase superfamily. YrrT family.

Functionally, could be a S-adenosyl-L-methionine-dependent methyltransferase. This is an uncharacterized protein from Bacillus subtilis (strain 168).